The chain runs to 165 residues: Chorismate pyruvate-lyase (165 aa).

Residues Met-35, Arg-77, Leu-115, and Glu-156 each contribute to the substrate site.

Belongs to the UbiC family. Monomer.

Its subcellular location is the cytoplasm. It catalyses the reaction chorismate = 4-hydroxybenzoate + pyruvate. It functions in the pathway cofactor biosynthesis; ubiquinone biosynthesis. Removes the pyruvyl group from chorismate, with concomitant aromatization of the ring, to provide 4-hydroxybenzoate (4HB) for the ubiquinone pathway. This Salmonella arizonae (strain ATCC BAA-731 / CDC346-86 / RSK2980) protein is Chorismate pyruvate-lyase.